The following is a 342-amino-acid chain: Tetraacyldisaccharide 4'-kinase (342 aa).

Residue 56-63 (TAGGAGKT) coordinates ATP.

The protein belongs to the LpxK family.

The catalysed reaction is a lipid A disaccharide + ATP = a lipid IVA + ADP + H(+). Its pathway is glycolipid biosynthesis; lipid IV(A) biosynthesis; lipid IV(A) from (3R)-3-hydroxytetradecanoyl-[acyl-carrier-protein] and UDP-N-acetyl-alpha-D-glucosamine: step 6/6. Functionally, transfers the gamma-phosphate of ATP to the 4'-position of a tetraacyldisaccharide 1-phosphate intermediate (termed DS-1-P) to form tetraacyldisaccharide 1,4'-bis-phosphate (lipid IVA). The polypeptide is Tetraacyldisaccharide 4'-kinase (Parvibaculum lavamentivorans (strain DS-1 / DSM 13023 / NCIMB 13966)).